We begin with the raw amino-acid sequence, 505 residues long: RNA-splicing ligase RtcB homolog (505 aa).

Asp119, Cys122, His227, His259, and His353 together coordinate Mn(2+). GMP is bound at residue 226 to 230 (NHYGE). GMP contacts are provided by residues 353–354 (HN), 402–405 (GGTM), Ser409, 428–431 (HGAG), and Lys504. The active-site GMP-histidine intermediate is the His428.

This sequence belongs to the RtcB family. As to quaternary structure, catalytic component of the tRNA-splicing ligase complex. Requires Mn(2+) as cofactor.

The catalysed reaction is a 3'-end 3'-phospho-ribonucleotide-RNA + a 5'-end dephospho-ribonucleoside-RNA + GTP = a ribonucleotidyl-ribonucleotide-RNA + GMP + diphosphate. It catalyses the reaction a 3'-end 2',3'-cyclophospho-ribonucleotide-RNA + a 5'-end dephospho-ribonucleoside-RNA + GTP + H2O = a ribonucleotidyl-ribonucleotide-RNA + GMP + diphosphate + H(+). Catalytic subunit of the tRNA-splicing ligase complex that acts by directly joining spliced tRNA halves to mature-sized tRNAs by incorporating the precursor-derived splice junction phosphate into the mature tRNA as a canonical 3',5'-phosphodiester. May act as an RNA ligase with broad substrate specificity, and may function toward other RNAs. The chain is RNA-splicing ligase RtcB homolog from Brugia malayi (Filarial nematode worm).